A 764-amino-acid chain; its full sequence is G-type lectin S-receptor-like serine/threonine-protein kinase SD3-1 (764 aa).

An N-terminal signal peptide occupies residues 1–24 (MKMLRALLLCLSLVFFLAFQIVVS). Bulb-type lectin domains lie at 25 to 151 (EIQL…QSFG) and 154 to 279 (TDTL…WKPV). The Extracellular segment spans residues 25–442 (EIQLGSKLVV…TKSHSICIPC (418 aa)). N-linked (GlcNAc...) asparagine glycans are attached at residues Asn-92, Asn-198, and Asn-248. Residues 283 to 320 (VENQCRVFATCGSQVCSFNSSGYTECNCPFNAFVSVSD) enclose the EGF-like; atypical domain. Cystine bridges form between Cys-287–Cys-298, Cys-293–Cys-308, Cys-332–Cys-413, Cys-365–Cys-388, and Cys-369–Cys-375. Asn-301 and Asn-353 each carry an N-linked (GlcNAc...) asparagine glycan. One can recognise an Apple domain in the interval 332-413 (CKSGFNMVKF…LSSISYVKTC (82 aa)). Asn-423 is a glycosylation site (N-linked (GlcNAc...) asparagine). The helical transmembrane segment at 443–463 (LVGATSTTLVLFLGFQLGIVV) threads the bilayer. Topologically, residues 464 to 764 (YIYRRKKKLA…SESSQSLYEP (301 aa)) are cytoplasmic. The 299-residue stretch at 466–764 (YRRKKKLAKK…SESSQSLYEP (299 aa)) folds into the Protein kinase domain. ATP contacts are provided by residues 508-516 (IGPQIFKGV) and Lys-526. The segment at 586 to 603 (LRSKKLTWRIRTDTCLSV) is caM-binding. The segment at 738–764 (DPPPPPFACARSSPTNSSESSQSLYEP) is disordered. A compositionally biased stretch (low complexity) spans 749–764 (SSPTNSSESSQSLYEP).

It is found in the cell membrane. The catalysed reaction is L-seryl-[protein] + ATP = O-phospho-L-seryl-[protein] + ADP + H(+). The enzyme catalyses L-threonyl-[protein] + ATP = O-phospho-L-threonyl-[protein] + ADP + H(+). The sequence is that of G-type lectin S-receptor-like serine/threonine-protein kinase SD3-1 (SD31) from Arabidopsis thaliana (Mouse-ear cress).